Reading from the N-terminus, the 256-residue chain is Hemin import ATP-binding protein HmuV (256 aa).

The ABC transporter domain maps to 2 to 238 (ISAQNLVYSL…QALTMLYGAD (237 aa)). Position 34–41 (34–41 (GPNGAGKS)) interacts with ATP.

The protein belongs to the ABC transporter superfamily. Heme (hemin) importer (TC 3.A.1.14.5) family. As to quaternary structure, the complex is composed of two ATP-binding proteins (HmuV), two transmembrane proteins (HmuU) and a solute-binding protein (HmuT).

It localises to the cell inner membrane. Part of the ABC transporter complex HmuTUV involved in hemin import. Responsible for energy coupling to the transport system. This Escherichia coli O157:H7 protein is Hemin import ATP-binding protein HmuV.